The sequence spans 1200 residues: Nuclear pore complex protein Nup133 (1200 aa).

The disordered stretch occupies residues 1-28; it reads MERNLQKQLYGISRESSPGARRYSMPAA.

Belongs to the nucleoporin Nup133 family. As to quaternary structure, forms part of the Nup107-Nup160 subcomplex in the nuclear pore.

The protein localises to the nucleus. It is found in the nuclear pore complex. Its function is as follows. Probable component of the nuclear pore complex (NPC). Plays a role in NPC assembly and/or maintenance. The chain is Nuclear pore complex protein Nup133 from Drosophila melanogaster (Fruit fly).